Consider the following 318-residue polypeptide: MQPLVLPGFFIPSPTVSAVEIGPLTIRFYALCILAGIVIGAWLTARRFRARGGTTAQAMDIIMWAVPFGIVGGRLYHVITDNQLYFGPGKDPWGAFRIWEGGLGIWGAVAVGLAGAAIGARRTGVRLATFADAAAPGLLLAQAMGRWGNWFNNELYGEPTNLPWKLQIHNMNPATGQAVLTADGTPETLGYFQPTFLYESLWCLAAAALLVFLDRRYKLGAGSVFALYVVLYTAGRFIFELMRSDYANTILGLRVNTWVSALLFLAALAVFLILRSRPRSASTAQSACSIDGFDTRANGHDPEKHDETDGKGNRHHVP.

Transmembrane regions (helical) follow at residues 23–43, 59–79, 98–118, 124–146, 192–212, 219–239, and 253–273; these read PLTI…GAWL, MDII…YHVI, IWEG…GAAI, GVRL…AMGR, FQPT…LLVF, LGAG…RFIF, and LRVN…VFLI. Arg146 serves as a coordination point for a 1,2-diacyl-sn-glycero-3-phospho-(1'-sn-glycerol). Over residues 293–312 the composition is skewed to basic and acidic residues; it reads FDTRANGHDPEKHDETDGKG. A disordered region spans residues 293 to 318; sequence FDTRANGHDPEKHDETDGKGNRHHVP.

The protein belongs to the Lgt family.

Its subcellular location is the cell membrane. The catalysed reaction is L-cysteinyl-[prolipoprotein] + a 1,2-diacyl-sn-glycero-3-phospho-(1'-sn-glycerol) = an S-1,2-diacyl-sn-glyceryl-L-cysteinyl-[prolipoprotein] + sn-glycerol 1-phosphate + H(+). Its pathway is protein modification; lipoprotein biosynthesis (diacylglyceryl transfer). Functionally, catalyzes the transfer of the diacylglyceryl group from phosphatidylglycerol to the sulfhydryl group of the N-terminal cysteine of a prolipoprotein, the first step in the formation of mature lipoproteins. The polypeptide is Phosphatidylglycerol--prolipoprotein diacylglyceryl transferase (Paenarthrobacter aurescens (strain TC1)).